A 255-amino-acid chain; its full sequence is Leucyl/phenylalanyl-tRNA--protein transferase (255 aa).

This sequence belongs to the L/F-transferase family.

The protein resides in the cytoplasm. The catalysed reaction is N-terminal L-lysyl-[protein] + L-leucyl-tRNA(Leu) = N-terminal L-leucyl-L-lysyl-[protein] + tRNA(Leu) + H(+). It carries out the reaction N-terminal L-arginyl-[protein] + L-leucyl-tRNA(Leu) = N-terminal L-leucyl-L-arginyl-[protein] + tRNA(Leu) + H(+). It catalyses the reaction L-phenylalanyl-tRNA(Phe) + an N-terminal L-alpha-aminoacyl-[protein] = an N-terminal L-phenylalanyl-L-alpha-aminoacyl-[protein] + tRNA(Phe). Functions in the N-end rule pathway of protein degradation where it conjugates Leu, Phe and, less efficiently, Met from aminoacyl-tRNAs to the N-termini of proteins containing an N-terminal arginine or lysine. This chain is Leucyl/phenylalanyl-tRNA--protein transferase, found in Burkholderia pseudomallei (strain 668).